Reading from the N-terminus, the 90-residue chain is Antitoxin epsilon (90 aa).

Belongs to the epsilon antitoxin family. In the presence of the zeta toxin, forms an inactive PezA(2)PezT(2) heterotetramer. The heterotetramer is still able to bind the zeta toxin substrate UNAG.

In terms of biological role, antitoxin component of a type II toxin-antitoxin (TA) system. Neutralizes the toxic effect of cognate zeta toxin. Part of a postsegregational killing (PSK) system involved in the killing of plasmid-free cells. Continuous synthesis of the epsilon antitoxin is required to counteract the zeta toxin. This chain is Antitoxin epsilon, found in Streptococcus pyogenes.